Reading from the N-terminus, the 429-residue chain is Glutamate-1-semialdehyde 2,1-aminomutase (429 aa).

N6-(pyridoxal phosphate)lysine is present on Lys265.

It belongs to the class-III pyridoxal-phosphate-dependent aminotransferase family. HemL subfamily. In terms of assembly, homodimer. Requires pyridoxal 5'-phosphate as cofactor.

It is found in the cytoplasm. The catalysed reaction is (S)-4-amino-5-oxopentanoate = 5-aminolevulinate. Its pathway is porphyrin-containing compound metabolism; protoporphyrin-IX biosynthesis; 5-aminolevulinate from L-glutamyl-tRNA(Glu): step 2/2. In Azotobacter vinelandii (strain DJ / ATCC BAA-1303), this protein is Glutamate-1-semialdehyde 2,1-aminomutase.